The primary structure comprises 255 residues: GTP cyclohydrolase FolE2 (255 aa).

The protein belongs to the GTP cyclohydrolase IV family.

The enzyme catalyses GTP + H2O = 7,8-dihydroneopterin 3'-triphosphate + formate + H(+). The protein operates within cofactor biosynthesis; 7,8-dihydroneopterin triphosphate biosynthesis; 7,8-dihydroneopterin triphosphate from GTP: step 1/1. Functionally, converts GTP to 7,8-dihydroneopterin triphosphate. This chain is GTP cyclohydrolase FolE2, found in Syntrophus aciditrophicus (strain SB).